The following is a 38-amino-acid chain: Odorant-binding protein 2 (38 aa).

This sequence belongs to the calycin superfamily. Lipocalin family. Nasal mucosa.

Its subcellular location is the secreted. The protein resides in the extracellular space. Its function is as follows. This soluble protein may play a specific role in odor discrimination and perception. This is Odorant-binding protein 2 from Hystrix cristata (North African crested porcupine).